Here is a 98-residue protein sequence, read N- to C-terminus: Ribonuclease P protein component 4 (98 aa).

Cysteine 62, cysteine 65, cysteine 85, and cysteine 88 together coordinate Zn(2+).

It belongs to the eukaryotic/archaeal RNase P protein component 4 family. As to quaternary structure, consists of a catalytic RNA component and at least 4-5 protein subunits. It depends on Zn(2+) as a cofactor.

The protein localises to the cytoplasm. The catalysed reaction is Endonucleolytic cleavage of RNA, removing 5'-extranucleotides from tRNA precursor.. In terms of biological role, part of ribonuclease P, a protein complex that generates mature tRNA molecules by cleaving their 5'-ends. The protein is Ribonuclease P protein component 4 of Thermoplasma volcanium (strain ATCC 51530 / DSM 4299 / JCM 9571 / NBRC 15438 / GSS1).